Here is a 738-residue protein sequence, read N- to C-terminus: Dipeptidyl peptidase 3 (738 aa).

A2 carries the N-acetylalanine modification. H450 contacts Zn(2+). E451 is an active-site residue. Zn(2+) contacts are provided by H455 and E508.

This sequence belongs to the peptidase M49 family. Requires Zn(2+) as cofactor.

It is found in the cytoplasm. It localises to the cytosol. It carries out the reaction Release of an N-terminal dipeptide from a peptide comprising four or more residues, with broad specificity. Also acts on dipeptidyl 2-naphthylamides.. Cleaves and degrades bioactive peptides, including angiotensin, Leu-enkephalin and Met-enkephalin. Also cleaves Arg-Arg-beta-naphthylamide (in vitro). The polypeptide is Dipeptidyl peptidase 3 (Dpp3) (Mus musculus (Mouse)).